Here is a 113-residue protein sequence, read N- to C-terminus: UPF0342 protein SMU_782 (113 aa).

Belongs to the UPF0342 family.

The chain is UPF0342 protein SMU_782 from Streptococcus mutans serotype c (strain ATCC 700610 / UA159).